The following is a 353-amino-acid chain: Outer membrane protein P5 (353 aa).

Positions 1-21 (MKKTAIALVVAGLAAASVAQA) are cleaved as a signal peptide. 8 beta stranded membrane passes run 27-37 (TFYAGVKAGQA), 58-69 (SFTYGVFGGYQI), 77-85 (LAVELGYDD), 104-115 (HGAHLSLKGSYE), 120-128 (LDVYGKAGV), 158-167 (GLFAVGAEYA), 172-179 (LAVRLEYQ), and 205-213 (SINAGISYR). The OmpA-like domain occupies 227–353 (VVSKTFSLNS…RVEIAVNGTK (127 aa)). C326 and C338 are disulfide-bonded.

Belongs to the outer membrane OOP (TC 1.B.6) superfamily. OmpA family. As to quaternary structure, monomer and homodimer.

The protein localises to the cell outer membrane. Functionally, with TolR probably plays a role in maintaining the position of the peptidoglycan cell wall in the periplasm. Acts as a porin with low permeability that allows slow penetration of small solutes; an internal gate slows down solute passage. The sequence is that of Outer membrane protein P5 from Haemophilus influenzae.